Reading from the N-terminus, the 184-residue chain is ATP synthase subunit b, chloroplastic (184 aa).

The helical transmembrane segment at 27-49 (FATNPINLSVVLGVLIFFGKGVL) threads the bilayer.

It belongs to the ATPase B chain family. F-type ATPases have 2 components, F(1) - the catalytic core - and F(0) - the membrane proton channel. F(1) has five subunits: alpha(3), beta(3), gamma(1), delta(1), epsilon(1). F(0) has four main subunits: a(1), b(1), b'(1) and c(10-14). The alpha and beta chains form an alternating ring which encloses part of the gamma chain. F(1) is attached to F(0) by a central stalk formed by the gamma and epsilon chains, while a peripheral stalk is formed by the delta, b and b' chains.

The protein localises to the plastid. Its subcellular location is the chloroplast thylakoid membrane. Functionally, f(1)F(0) ATP synthase produces ATP from ADP in the presence of a proton or sodium gradient. F-type ATPases consist of two structural domains, F(1) containing the extramembraneous catalytic core and F(0) containing the membrane proton channel, linked together by a central stalk and a peripheral stalk. During catalysis, ATP synthesis in the catalytic domain of F(1) is coupled via a rotary mechanism of the central stalk subunits to proton translocation. Its function is as follows. Component of the F(0) channel, it forms part of the peripheral stalk, linking F(1) to F(0). The protein is ATP synthase subunit b, chloroplastic of Ipomoea purpurea (Common morning glory).